Reading from the N-terminus, the 393-residue chain is Short-chain dehydrogenase/reductase family 42E member 1 (393 aa).

Y152 serves as the catalytic Proton acceptor. NAD(+) is bound at residue K156. The next 2 membrane-spanning stretches (helical) occupy residues 282-302 (LPLTLVYCFAFLTEMVHFILG) and 371-391 (GLLVFLLIIAVLMWLPSSVIL).

The protein belongs to the 3-beta-HSD family.

It localises to the membrane. In Homo sapiens (Human), this protein is Short-chain dehydrogenase/reductase family 42E member 1 (SDR42E1).